We begin with the raw amino-acid sequence, 62 residues long: ATP synthase subunit K, mitochondrial (62 aa).

Residues 14–30 form a helical membrane-spanning segment; that stretch reads HHLAIATIGTVVALVAP.

F-type ATP synthases have 2 components, the catalytic core F(1) and the membrane-embedded component F(0), linked together by a central stalk and a peripheral stalk. The central stalk, also called rotor shaft, is often seen as part of F(1). The peripheral stalk is seen as part of F(0). F(0) contains the membrane channel next to the rotor. F-type ATP synthases form dimers but each monomer functions independently in ATP generation. The dimer consists of 18 different polypeptides: ATP1 (subunit alpha, part of F(1), 3 molecules per monomer), ATP2 (subunit beta, part of F(1), 3 molecules per monomer), ATP3 (subunit gamma, part of the central stalk), ATP4 (subunit b, part of the peripheral stalk), ATP5/OSCP (subunit 5/OSCP, part of the peripheral stalk), ATP6 (subunit a, part of the peripheral stalk), ATP7 (subunit d, part of the peripheral stalk), ATP8 (subunit 8, part of the peripheral stalk), OLI1 (subunit c, part of the rotor, 10 molecules per monomer), ATP14 (subunit h, part of the peripheral stalk), ATP15 (subunit epsilon, part of the central stalk), ATP16 (subunit delta, part of the central stalk), ATP17 (subunit f, part of the peripheral stalk), ATP18 (subunit i/j, part of the peripheral stalk). Dimer-specific subunits are ATP19 (subunit k, at interface between monomers), ATP20 (subunit g, at interface between monomers), TIM11 (subunit e, at interface between monomers). Also contains subunit L.

It is found in the mitochondrion inner membrane. Its function is as follows. Mitochondrial membrane ATP synthase (F(1)F(0) ATP synthase or Complex V) produces ATP from ADP in the presence of a proton gradient across the membrane which is generated by electron transport complexes of the respiratory chain. F-type ATP synthases consist of two structural domains, F(1) - containing the extramembraneous catalytic core, and F(0) - containing the membrane proton channel, linked together by a central stalk and a peripheral stalk. During catalysis, ATP synthesis in the catalytic domain of F(1) is coupled via a rotary mechanism of the central stalk subunits to proton translocation. Part of the complex F(0) domain. Minor subunit located with subunit a/ATP6 in the membrane. The K chain binds the dimeric form by interacting with the G and E chains. The protein is ATP synthase subunit K, mitochondrial of Pichia angusta (Yeast).